We begin with the raw amino-acid sequence, 531 residues long: Isocitrate lyase (531 aa).

101 to 103 (SGW) lines the substrate pocket. Asp184 contributes to the Mg(2+) binding site. Catalysis depends on Cys222, which acts as the Proton acceptor. Substrate contacts are provided by residues 223–224 (GH), 380–384 (NNSPS), and Thr451.

The protein belongs to the isocitrate lyase/PEP mutase superfamily. Isocitrate lyase family. As to quaternary structure, homotetramer. It depends on Mg(2+) as a cofactor.

It carries out the reaction D-threo-isocitrate = glyoxylate + succinate. The protein operates within carbohydrate metabolism; glyoxylate cycle; (S)-malate from isocitrate: step 1/2. Its function is as follows. Involved in the metabolic adaptation in response to environmental changes. Catalyzes the reversible formation of succinate and glyoxylate from isocitrate, a key step of the glyoxylate cycle, which operates as an anaplerotic route for replenishing the tricarboxylic acid cycle during growth on fatty acid substrates. This is Isocitrate lyase from Pseudomonas aeruginosa (strain ATCC 15692 / DSM 22644 / CIP 104116 / JCM 14847 / LMG 12228 / 1C / PRS 101 / PAO1).